The following is a 318-amino-acid chain: Olfactory receptor 2T3 (318 aa).

Residues 1–30 (MCSGNQTSQNQTASTDFTLTGLFAESKHAA) are Extracellular-facing. Residues N5 and N10 are each glycosylated (N-linked (GlcNAc...) asparagine). The chain crosses the membrane as a helical span at residues 31–54 (LLYTVTFLLFLMALTGNALLILLI). Residues 55–62 (HSEPRLHT) are Cytoplasmic-facing. A helical membrane pass occupies residues 63-84 (PMYFFISQLALMDLMYLCVTVP). The Extracellular portion of the chain corresponds to 85-105 (KMLVGQVTGDDTISPSGCGIQ). Cysteines 102 and 194 form a disulfide. A helical transmembrane segment spans residues 106–125 (MFFYLTLAGAEVFLLAAMAY). The Cytoplasmic portion of the chain corresponds to 126 to 144 (DRYAAVCRPLHYPLLMNQR). The chain crosses the membrane as a helical span at residues 145-163 (VCQLLVSACWVLGMVDGLL). At 164–200 (LTPITMSFPFCQSRKILSFFCETPALLKLSCSDVSLY) the chain is on the extracellular side. Residues 201–224 (KTLMYLCCILMLLAPIMVISSSYT) form a helical membrane-spanning segment. Topologically, residues 225 to 241 (LILHLIHRMNSAAGHRK) are cytoplasmic. The chain crosses the membrane as a helical span at residues 242 to 264 (ALATCSSHMIIVLLLFGASFYTY). Residues 265-277 (MLPSSYHTAEQDM) lie on the Extracellular side of the membrane. Residues 278–297 (MVSAFYTIFTPVLNPLIYSL) traverse the membrane as a helical segment. At 298 to 318 (RNKDVTRALRSMMQSRMNQEK) the chain is on the cytoplasmic side.

This sequence belongs to the G-protein coupled receptor 1 family.

Its subcellular location is the cell membrane. Odorant receptor. This chain is Olfactory receptor 2T3 (OR2T3), found in Homo sapiens (Human).